Reading from the N-terminus, the 511-residue chain is UPF0288 protein MK0796 (511 aa).

Belongs to the UPF0288 family.

This is UPF0288 protein MK0796 from Methanopyrus kandleri (strain AV19 / DSM 6324 / JCM 9639 / NBRC 100938).